A 294-amino-acid chain; its full sequence is tRNA dimethylallyltransferase (294 aa).

9-16 (GATATGKS) provides a ligand contact to ATP. 11 to 16 (TATGKS) provides a ligand contact to substrate. The interaction with substrate tRNA stretch occupies residues 34–37 (DSRQ).

It belongs to the IPP transferase family. As to quaternary structure, monomer. Requires Mg(2+) as cofactor.

It catalyses the reaction adenosine(37) in tRNA + dimethylallyl diphosphate = N(6)-dimethylallyladenosine(37) in tRNA + diphosphate. Catalyzes the transfer of a dimethylallyl group onto the adenine at position 37 in tRNAs that read codons beginning with uridine, leading to the formation of N6-(dimethylallyl)adenosine (i(6)A). The polypeptide is tRNA dimethylallyltransferase (Trichormus variabilis (strain ATCC 29413 / PCC 7937) (Anabaena variabilis)).